We begin with the raw amino-acid sequence, 221 residues long: Uracil-DNA glycosylase (221 aa).

The Proton acceptor role is filled by D65.

It belongs to the uracil-DNA glycosylase (UDG) superfamily. UNG family.

It localises to the cytoplasm. The catalysed reaction is Hydrolyzes single-stranded DNA or mismatched double-stranded DNA and polynucleotides, releasing free uracil.. Excises uracil residues from the DNA which can arise as a result of misincorporation of dUMP residues by DNA polymerase or due to deamination of cytosine. The polypeptide is Uracil-DNA glycosylase (Christiangramia forsetii (strain DSM 17595 / CGMCC 1.15422 / KT0803) (Gramella forsetii)).